The sequence spans 158 residues: MSEQNNTEMAFQIQRIYTKDISFEAPKAPQVFQQEWQPEVKLDLDTASSQLADDIYEVVLRVTVTASLGEETAFLCEVQQGGIFTVGGIEGTQLAHCLGAYCPNILFPYARECITSLVSRGTFPQLNLAPVNFDALFMNYLQQQTEGEGEGAAQHQDA.

The protein belongs to the SecB family. As to quaternary structure, homotetramer, a dimer of dimers. One homotetramer interacts with 1 SecA dimer.

It localises to the cytoplasm. In terms of biological role, one of the proteins required for the normal export of preproteins out of the cell cytoplasm. It is a molecular chaperone that binds to a subset of precursor proteins, maintaining them in a translocation-competent state. It also specifically binds to its receptor SecA. This is Protein-export protein SecB from Pectobacterium atrosepticum (strain SCRI 1043 / ATCC BAA-672) (Erwinia carotovora subsp. atroseptica).